The following is a 513-amino-acid chain: ATP synthase subunit alpha (513 aa).

171 to 178 (GDRQIGKT) is an ATP binding site.

It belongs to the ATPase alpha/beta chains family. In terms of assembly, F-type ATPases have 2 components, CF(1) - the catalytic core - and CF(0) - the membrane proton channel. CF(1) has five subunits: alpha(3), beta(3), gamma(1), delta(1), epsilon(1). CF(0) has three main subunits: a(1), b(2) and c(9-12). The alpha and beta chains form an alternating ring which encloses part of the gamma chain. CF(1) is attached to CF(0) by a central stalk formed by the gamma and epsilon chains, while a peripheral stalk is formed by the delta and b chains.

It is found in the cell inner membrane. The catalysed reaction is ATP + H2O + 4 H(+)(in) = ADP + phosphate + 5 H(+)(out). In terms of biological role, produces ATP from ADP in the presence of a proton gradient across the membrane. The alpha chain is a regulatory subunit. This Wolbachia sp. subsp. Drosophila simulans (strain wRi) protein is ATP synthase subunit alpha.